A 187-amino-acid polypeptide reads, in one-letter code: Hypoxanthine/guanine phosphoribosyltransferase (187 aa).

It belongs to the purine/pyrimidine phosphoribosyltransferase family. Archaeal HPRT subfamily. As to quaternary structure, homodimer.

It localises to the cytoplasm. The enzyme catalyses IMP + diphosphate = hypoxanthine + 5-phospho-alpha-D-ribose 1-diphosphate. It catalyses the reaction GMP + diphosphate = guanine + 5-phospho-alpha-D-ribose 1-diphosphate. Its pathway is purine metabolism; IMP biosynthesis via salvage pathway; IMP from hypoxanthine: step 1/1. Its function is as follows. Catalyzes a salvage reaction resulting in the formation of IMP that is energically less costly than de novo synthesis. In Ferroglobus placidus (strain DSM 10642 / AEDII12DO), this protein is Hypoxanthine/guanine phosphoribosyltransferase.